The primary structure comprises 361 residues: 3-isopropylmalate dehydrogenase (361 aa).

Position 78–91 (78–91) interacts with NAD(+); it reads GTQWDSLPRHLRPE. Residues R98, R108, R136, and D226 each contribute to the substrate site. Residues D226, D250, and D254 each coordinate Mg(2+). NAD(+) is bound at residue 284–296; that stretch reads GSAPDIAGQDKAN.

This sequence belongs to the isocitrate and isopropylmalate dehydrogenases family. LeuB type 1 subfamily. Homodimer. Mg(2+) is required as a cofactor. Mn(2+) serves as cofactor.

Its subcellular location is the cytoplasm. The enzyme catalyses (2R,3S)-3-isopropylmalate + NAD(+) = 4-methyl-2-oxopentanoate + CO2 + NADH. It functions in the pathway amino-acid biosynthesis; L-leucine biosynthesis; L-leucine from 3-methyl-2-oxobutanoate: step 3/4. Its function is as follows. Catalyzes the oxidation of 3-carboxy-2-hydroxy-4-methylpentanoate (3-isopropylmalate) to 3-carboxy-4-methyl-2-oxopentanoate. The product decarboxylates to 4-methyl-2 oxopentanoate. In Thermosynechococcus vestitus (strain NIES-2133 / IAM M-273 / BP-1), this protein is 3-isopropylmalate dehydrogenase.